The chain runs to 194 residues: Molybdenum cofactor guanylyltransferase (194 aa).

Residues 12-14 (LAG), Lys-25, Asn-53, Asp-70, and Asp-100 each bind GTP. A Mg(2+)-binding site is contributed by Asp-100.

This sequence belongs to the MobA family. In terms of assembly, monomer. Requires Mg(2+) as cofactor.

The protein localises to the cytoplasm. It carries out the reaction Mo-molybdopterin + GTP + H(+) = Mo-molybdopterin guanine dinucleotide + diphosphate. Its function is as follows. Transfers a GMP moiety from GTP to Mo-molybdopterin (Mo-MPT) cofactor (Moco or molybdenum cofactor) to form Mo-molybdopterin guanine dinucleotide (Mo-MGD) cofactor. The polypeptide is Molybdenum cofactor guanylyltransferase (Aliivibrio salmonicida (strain LFI1238) (Vibrio salmonicida (strain LFI1238))).